We begin with the raw amino-acid sequence, 471 residues long: 3-isopropylmalate dehydratase large subunit (471 aa).

[4Fe-4S] cluster is bound by residues C347, C407, and C410.

The protein belongs to the aconitase/IPM isomerase family. LeuC type 1 subfamily. In terms of assembly, heterodimer of LeuC and LeuD. It depends on [4Fe-4S] cluster as a cofactor.

The enzyme catalyses (2R,3S)-3-isopropylmalate = (2S)-2-isopropylmalate. The protein operates within amino-acid biosynthesis; L-leucine biosynthesis; L-leucine from 3-methyl-2-oxobutanoate: step 2/4. Its function is as follows. Catalyzes the isomerization between 2-isopropylmalate and 3-isopropylmalate, via the formation of 2-isopropylmaleate. This is 3-isopropylmalate dehydratase large subunit from Granulibacter bethesdensis (strain ATCC BAA-1260 / CGDNIH1).